A 504-amino-acid polypeptide reads, in one-letter code: L-carnitine/gamma-butyrobetaine antiporter (504 aa).

The next 12 helical transmembrane spans lie at 10 to 30, 51 to 71, 92 to 112, 143 to 163, 195 to 215, 231 to 251, 263 to 283, 316 to 336, 347 to 367, 398 to 418, 446 to 466, and 475 to 495; these read IEPK…WLTV, WGWA…WLVF, IFMM…SIEI, GPLP…FFFV, FYLV…TPLV, LDAI…ACGL, SYLS…SFIM, WTVF…IFLA, LCFG…TVLG, WAAL…CFIA, LLVR…LLAL, and AIIA…LSFI.

Belongs to the BCCT transporter (TC 2.A.15) family. CaiT subfamily. In terms of assembly, homotrimer.

The protein resides in the cell inner membrane. It catalyses the reaction 4-(trimethylamino)butanoate(in) + (R)-carnitine(out) = 4-(trimethylamino)butanoate(out) + (R)-carnitine(in). Its pathway is amine and polyamine metabolism; carnitine metabolism. Its function is as follows. Catalyzes the exchange of L-carnitine for gamma-butyrobetaine. The sequence is that of L-carnitine/gamma-butyrobetaine antiporter from Escherichia coli (strain ATCC 8739 / DSM 1576 / NBRC 3972 / NCIMB 8545 / WDCM 00012 / Crooks).